A 285-amino-acid chain; its full sequence is Heterogeneous nuclear ribonucleoprotein A/B (285 aa).

A disordered region spans residues 1 to 65 (MSDAAEEQPM…NQNGAEGDQI (65 aa)). Low complexity predominate over residues 25–43 (EGEAPVEPSAAAAAPAASA). 2 consecutive RRM domains span residues 75 to 158 (GKMF…KDPV) and 159 to 238 (KKIF…QPKE). Phosphoserine is present on Ser-87. Residues Lys-136 and Lys-208 each participate in a glycyl lysine isopeptide (Lys-Gly) (interchain with G-Cter in SUMO2) cross-link. Lys-220 is modified (N6-acetyllysine). Residues 239-285 (VYQQQQYGSGGRGNRNRGNRGSGGGQGSTNYGKSQRRGGHQNNYKPY) form a disordered region. The residue at position 247 (Ser-247) is a Phosphoserine. Arg-250 is subject to Dimethylated arginine; alternate. Arg-250 carries the omega-N-methylarginine; alternate modification. Omega-N-methylarginine is present on residues Arg-255 and Arg-258. The residue at position 271 (Lys-271) is an N6-acetyllysine. Arg-275 is modified (dimethylated arginine; alternate). Arg-275 is subject to Omega-N-methylarginine; alternate. Residue Arg-275 is modified to Asymmetric dimethylarginine; alternate.

As to quaternary structure, identified in a IGF2BP1-dependent mRNP granule complex containing untranslated mRNAs. Interacts with APOBEC1. Ubiquitous.

The protein localises to the nucleus. Its subcellular location is the cytoplasm. Functionally, transcriptional repressor. Binds to CArG box motifs, single-stranded and double-stranded DNA, and RNA. It may be that repression by CBF-A is a result of competitive binding of CBF, a putative positive factor, and CBF-A to the same or overlapping motifs around the CArG boxes. This is Heterogeneous nuclear ribonucleoprotein A/B (Hnrnpab) from Mus musculus (Mouse).